Here is a 977-residue protein sequence, read N- to C-terminus: Macrophage colony-stimulating factor 1 receptor (977 aa).

Residues 1–18 (MFFALLFLIGILLGQVQG) form the signal peptide. Topologically, residues 19–519 (WSEPRIRLSS…MEVSDQIFTS (501 aa)) are extracellular. Ig-like C2-type domains follow at residues 22 to 109 (PRIR…VHVF), 120 to 198 (PSTS…EKVS), 213 to 305 (PYVY…TQLL), 316 to 407 (PKLS…ASIT), and 408 to 513 (FDIK…MEVS). A disulfide bridge links Cys48 with Cys92. 10 N-linked (GlcNAc...) asparagine glycosylation sites follow: Asn98, Asn101, Asn154, Asn163, Asn244, Asn286, Asn298, Asn361, Asn424, and Asn455. 2 disulfide bridges follow: Cys138/Cys187 and Cys234/Cys289. A disulfide bond links Cys430 and Cys495. A helical membrane pass occupies residues 520–540 (AMCGSTVAMVVLGLLLIFMIY). Residues 541–977 (KYKQKPRYEI…LMKPNNYQFC (437 aa)) lie on the Cytoplasmic side of the membrane. Positions 544 to 576 (QKPRYEIRWKIIEATNGNNYTFIDPTQLPYNEK) are regulatory juxtamembrane domain. Tyr563 bears the Phosphotyrosine; by autocatalysis mark. Residues 584–917 (LKLGKTLGAG…KISQMIQRML (334 aa)) form the Protein kinase domain. ATP-binding positions include 590-598 (LGAGAFGKV) and Lys618. Tyr701 and Tyr725 each carry phosphotyrosine; by autocatalysis. Asp781 serves as the catalytic Proton acceptor. An activation loop region spans residues 799 to 821 (DFGLARDIMNDSNYVVKGNARLP). Tyr812 and Tyr929 each carry phosphotyrosine; by autocatalysis. A disordered region spans residues 919-977 (ETSEQQDTQEYKNIPTEAEAEQQLESCDPVKHEDESFETSCDQEEEDQPLMKPNNYQFC). Acidic residues predominate over residues 953 to 966 (ESFETSCDQEEEDQ). Phosphotyrosine; by autocatalysis is present on Tyr974.

It belongs to the protein kinase superfamily. Tyr protein kinase family. CSF-1/PDGF receptor subfamily. As to quaternary structure, monomer. Homodimer. Interacts with CSF1. In terms of processing, autophosphorylated in response to CSF1 binding. autophosphorylation, leading to its degradation. Post-translationally, ubiquitinated. Becomes rapidly polyubiquitinated after autophosphorylation, leading to its degradation.

The protein localises to the cell membrane. It carries out the reaction L-tyrosyl-[protein] + ATP = O-phospho-L-tyrosyl-[protein] + ADP + H(+). With respect to regulation, present in an inactive conformation in the absence of bound ligand. CSF1 binding leads to dimerization and activation by autophosphorylation on tyrosine residues. Tyrosine-protein kinase that acts as a cell-surface receptor for CSF1 and plays an essential role in the regulation of survival, proliferation and differentiation of hematopoietic precursor cells, especially mononuclear phagocytes, such as macrophages and monocytes. Plays an important role in innate immunity and in inflammatory processes. Plays an important role in the regulation of osteoclast proliferation and differentiation, the regulation of bone resorption, and is required for normal bone development. Promotes reorganization of the actin cytoskeleton, regulates formation of membrane ruffles, cell adhesion and cell migration. Activates several signaling pathways in response to ligand binding. The polypeptide is Macrophage colony-stimulating factor 1 receptor (csf1r) (Danio rerio (Zebrafish)).